Here is a 116-residue protein sequence, read N- to C-terminus: Ribosome-binding factor A (116 aa).

This sequence belongs to the RbfA family. In terms of assembly, monomer. Binds 30S ribosomal subunits, but not 50S ribosomal subunits or 70S ribosomes.

It localises to the cytoplasm. One of several proteins that assist in the late maturation steps of the functional core of the 30S ribosomal subunit. Associates with free 30S ribosomal subunits (but not with 30S subunits that are part of 70S ribosomes or polysomes). Required for efficient processing of 16S rRNA. May interact with the 5'-terminal helix region of 16S rRNA. This chain is Ribosome-binding factor A, found in Streptococcus pyogenes serotype M28 (strain MGAS6180).